Here is a 106-residue protein sequence, read N- to C-terminus: 3-oxoacyl-[acyl-carrier-protein] reductase (106 aa).

The protein belongs to the short-chain dehydrogenases/reductases (SDR) family. In terms of assembly, homotetramer. Mesocarp.

Its subcellular location is the plastid. It is found in the chloroplast. The enzyme catalyses a (3R)-hydroxyacyl-[ACP] + NADP(+) = a 3-oxoacyl-[ACP] + NADPH + H(+). It participates in lipid metabolism; fatty acid biosynthesis. The protein is 3-oxoacyl-[acyl-carrier-protein] reductase of Persea americana (Avocado).